Here is a 208-residue protein sequence, read N- to C-terminus: MSAGGDFGNPLRKFKLVFLGEQSVGKTSLITRFMYDSFDNTYQATIGIDFLSKTMYLEDRTVRLQLWDTAGQERFRSLIPSYIRDSTVAVVVYDITNLNSFQQTSKWIDDVRTERGSDVIIMLVGNKTDLADKRQITIEEGEQRAKELSVMFIETSAKTGYNVKQLFRRVASALPGMENVQEKSKEGMIDIKLDKPQEPPASEGGCSC.

Residues 20–27 (GEQSVGKT), threonine 45, 68–72 (DTAGQ), and 126–129 (NKTD) contribute to the GTP site. The Effector region signature appears at 42–50 (YQATIGIDF). 2 S-geranylgeranyl cysteine lipidation sites follow: cysteine 206 and cysteine 208. Cysteine 208 carries the post-translational modification Cysteine methyl ester.

Belongs to the small GTPase superfamily. Rab family. In terms of assembly, interacts (GTP-bound) with BICD1 (via C-terminus); the interaction is direct. Interacts (GDP-bound) with DYNLRB1. Interacts (GTP-bound) with APBA1/MINT1. Interacts (GTP-bound) with VPS13B.

It localises to the golgi apparatus membrane. The protein resides in the endoplasmic reticulum-Golgi intermediate compartment. Its subcellular location is the cytoplasmic vesicle. The enzyme catalyses GTP + H2O = GDP + phosphate + H(+). With respect to regulation, regulated by guanine nucleotide exchange factors (GEFs) which promote the exchange of bound GDP for free GTP, GTPase activating proteins (GAPs) which increase the GTP hydrolysis activity, and GDP dissociation inhibitors which inhibit the dissociation of the nucleotide from the GTPase. Its function is as follows. The small GTPases Rab are key regulators of intracellular membrane trafficking, from the formation of transport vesicles to their fusion with membranes. Rabs cycle between active GTP-bound and inactive GDP-bound states. In their active state, drive transport of vesicular carriers from donor organelles to acceptor organelles to regulate the membrane traffic that maintains organelle identity and morphology. Recruits VPS13B to the Golgi membrane. Regulates the compacted morphology of the Golgi. Seems to have a role in retrograde membrane traffic at the level of the Golgi complex. May function in retrograde transport in neuronal cells. Plays a role in neuron projection development. The sequence is that of Ras-related protein Rab-6B (RAB6B) from Bos taurus (Bovine).